We begin with the raw amino-acid sequence, 492 residues long: 56 kDa U1 small nuclear ribonucleoprotein component (492 aa).

Residues 1 to 15 (MRPRRRGLAYHHTKP) are compositionally biased toward basic residues. Disordered stretches follow at residues 1–35 (MRPR…QRRK) and 300–371 (DQFP…NKPG). The span at 18-30 (QLSQGHYPTTSND) shows a compositional bias: polar residues. Residues 310–321 (SNSPSSNSISSS) show a composition bias toward low complexity. Residues 329 to 353 (TSYQTQPQRHAVNKPSNVLNSSNRH) are compositionally biased toward polar residues.

Component of the 18S U1 snRNP particle, a subcomplex of the spliceosome. Interacts with the nuclear cap-binding complex CBC1-CBC2 (yCBC). Directly contacts intronic sequences of substrate pre-RNA.

It localises to the nucleus. In terms of biological role, component of the U1 snRNP particle, which recognizes and binds the 5'-splice site of pre-mRNA. Together with other non-snRNP factors, U1 snRNP forms the spliceosomal commitment complex, that targets pre-mRNA to the splicing pathway. The chain is 56 kDa U1 small nuclear ribonucleoprotein component (SNU56) from Saccharomyces cerevisiae (strain ATCC 204508 / S288c) (Baker's yeast).